We begin with the raw amino-acid sequence, 185 residues long: Elongation factor P (185 aa).

It belongs to the elongation factor P family.

It localises to the cytoplasm. It participates in protein biosynthesis; polypeptide chain elongation. Functionally, involved in peptide bond synthesis. Stimulates efficient translation and peptide-bond synthesis on native or reconstituted 70S ribosomes in vitro. Probably functions indirectly by altering the affinity of the ribosome for aminoacyl-tRNA, thus increasing their reactivity as acceptors for peptidyl transferase. This chain is Elongation factor P, found in Staphylococcus saprophyticus subsp. saprophyticus (strain ATCC 15305 / DSM 20229 / NCIMB 8711 / NCTC 7292 / S-41).